The sequence spans 148 residues: UPF0178 protein LPC_0108 (148 aa).

The protein belongs to the UPF0178 family.

This is UPF0178 protein LPC_0108 from Legionella pneumophila (strain Corby).